Reading from the N-terminus, the 443-residue chain is Protoheme IX farnesyltransferase, mitochondrial (443 aa).

A run of 7 helical transmembrane segments spans residues 174-194 (AAGFALAPGPFDWPCFLLTSV), 235-255 (LAVSFATCCAVPGVAILTLGV), 257-277 (PLTGALGLFNIFLYTCCYTPL), 280-300 (ISIANTWVGAVVGAIPPVMGW), 309-329 (AGAFLLGGILYSWQFPHFNAL), 364-384 (LLVLSAAAPVLDITTWTFPIM), and 411-431 (LFFCSLWHLPLLLLLMLTCKR).

It belongs to the UbiA prenyltransferase family.

The protein localises to the mitochondrion membrane. It catalyses the reaction heme b + (2E,6E)-farnesyl diphosphate + H2O = Fe(II)-heme o + diphosphate. Functionally, converts protoheme IX and farnesyl diphosphate to heme O. In Homo sapiens (Human), this protein is Protoheme IX farnesyltransferase, mitochondrial (COX10).